The primary structure comprises 593 residues: Gamma-humulene synthase (593 aa).

A compositionally biased stretch (polar residues) spans 1-26; it reads MAQISESVSPSTDLKSTESSITSNRH. Positions 1 to 34 are disordered; sequence MAQISESVSPSTDLKSTESSITSNRHGNMWEDDR. Residues aspartate 343, aspartate 347, aspartate 488, and glutamate 496 each contribute to the Mg(2+) site. A DDXXD motif motif is present at residues 343–347; it reads DDLYD.

It belongs to the terpene synthase family. Tpsd subfamily. It depends on Mg(2+) as a cofactor. K(+) serves as cofactor.

The protein resides in the cytoplasm. The catalysed reaction is (2E,6E)-farnesyl diphosphate = gamma-humulene + diphosphate. It carries out the reaction (2E,6E)-farnesyl diphosphate = sibirene + diphosphate. It catalyses the reaction (2E,6E)-farnesyl diphosphate = longifolene + diphosphate. The enzyme catalyses (2E,6E)-farnesyl diphosphate = beta-himachalene + diphosphate. The catalysed reaction is (2E,6E)-farnesyl diphosphate = gamma-himachalene + diphosphate. It carries out the reaction (2E,6E)-farnesyl diphosphate = alpha-himachalene + diphosphate. The protein operates within terpene metabolism; oleoresin biosynthesis. Its function is as follows. Involved in defensive oleoresin formation in conifers in response to insect attack or other injury. Involved in 52 sesquiterpene (C15) olefins biosynthesis. This chain is Gamma-humulene synthase (ag5), found in Abies grandis (Grand fir).